The sequence spans 426 residues: Enolase (426 aa).

Glutamine 165 is a (2R)-2-phosphoglycerate binding site. Residue glutamate 209 is the Proton donor of the active site. Mg(2+) is bound by residues aspartate 244, glutamate 287, and aspartate 313. (2R)-2-phosphoglycerate-binding residues include lysine 338, arginine 367, serine 368, and lysine 389. Lysine 338 functions as the Proton acceptor in the catalytic mechanism.

This sequence belongs to the enolase family. It depends on Mg(2+) as a cofactor.

It is found in the cytoplasm. The protein resides in the secreted. The protein localises to the cell surface. The catalysed reaction is (2R)-2-phosphoglycerate = phosphoenolpyruvate + H2O. It participates in carbohydrate degradation; glycolysis; pyruvate from D-glyceraldehyde 3-phosphate: step 4/5. Functionally, catalyzes the reversible conversion of 2-phosphoglycerate (2-PG) into phosphoenolpyruvate (PEP). It is essential for the degradation of carbohydrates via glycolysis. The chain is Enolase from Methanococcus vannielii (strain ATCC 35089 / DSM 1224 / JCM 13029 / OCM 148 / SB).